A 297-amino-acid chain; its full sequence is Nucleotide-binding protein BTH_I0482 (297 aa).

Position 8–15 (8–15) interacts with ATP; the sequence is GISGSGKS. A GTP-binding site is contributed by 57 to 60; the sequence is DARS.

It belongs to the RapZ-like family.

Its function is as follows. Displays ATPase and GTPase activities. The polypeptide is Nucleotide-binding protein BTH_I0482 (Burkholderia thailandensis (strain ATCC 700388 / DSM 13276 / CCUG 48851 / CIP 106301 / E264)).